The primary structure comprises 595 residues: Aspartate--tRNA(Asp/Asn) ligase (595 aa).

Glu-175 is an L-aspartate binding site. The interval 199–202 is aspartate; the sequence is QQYK. L-aspartate is bound by residues Arg-221 and His-454. 221–223 contacts ATP; sequence RDE. Glu-488 contributes to the ATP binding site. Residue Arg-495 coordinates L-aspartate. 540–543 serves as a coordination point for ATP; sequence GIDR.

Belongs to the class-II aminoacyl-tRNA synthetase family. Type 1 subfamily. Homodimer.

The protein localises to the cytoplasm. It carries out the reaction tRNA(Asx) + L-aspartate + ATP = L-aspartyl-tRNA(Asx) + AMP + diphosphate. Functionally, aspartyl-tRNA synthetase with relaxed tRNA specificity since it is able to aspartylate not only its cognate tRNA(Asp) but also tRNA(Asn). Reaction proceeds in two steps: L-aspartate is first activated by ATP to form Asp-AMP and then transferred to the acceptor end of tRNA(Asp/Asn). This Brucella abortus (strain S19) protein is Aspartate--tRNA(Asp/Asn) ligase.